The sequence spans 180 residues: Putative 5'(3')-deoxyribonucleotidase (180 aa).

D9 (nucleophile) is an active-site residue. Mg(2+)-binding residues include D9, D11, and D135. Catalysis depends on D11, which acts as the Proton donor.

Belongs to the 5'(3')-deoxyribonucleotidase family. The cofactor is Mg(2+).

Functionally, dephosphorylates the 5' and 2'(3')-phosphates of deoxyribonucleotides. This is Putative 5'(3')-deoxyribonucleotidase from Staphylococcus aureus (strain Mu50 / ATCC 700699).